Reading from the N-terminus, the 1154-residue chain is MAVPARTCGASWPGPVRTARPWPGRGPRPCPDPRGPASGPARPLLLLLPPLLLLPLLTAPGASAYSFPQQHTMQHWARRLEQEIDGVMRIFGGVQQLREIYKDNRNLFEVQENEPQKLVEKVAGDIESLLDRKVQALKRLADAAENFQKAHRWQDNIKEEDIMYYDAKADAELDDPESEDMERGSKTSALRLDFIEDPNFKNKVNYSYTAVQIPTDIYKGSTVILNELNWTEALENVFIENRRQDPTLLWQVFGSATGVTRYYPATPWRAPKKIDLYDVRRRPWYIQGASSPKDMVIIVDVSGSVSGLTLKLMKTSVCEMLDTLSDDDYVNVASFNEKAQPVSCFTHLVQANVRNKKVFKEAVQGMVAKGTTGYKAGFEYAFDQLQNSNITRANCNKMIMMFTDGGEDRVQDVFEKYNWPNRTVRVFTFSVGQHNYDVTPLQWMACTNKGYYFEIPSIGAIRINTQEYLDVLGRPMVLAGKDAKQVQWTNVYEDALGLGLVVTGTLPVFNLTQDGPGEKKNQLILGVMGIDVALNDIKRLTPNYTLGANGYVFAIDLNGYVLLHPNLKPQTTNFREPVTLDFLDAELEDENKEEIRRSMIDGDKGHKQIRTLVKSLDERYIDEVIRNYTWVPIRSTNYSLGLVLPPYSTYYLQANLSDQILQVKLPISKLKDFEFLLPSSFESEGHVFIAPREYCKDLNASDNNTEFLKNFIELMEKVTPDSKQCNNFLLHNLILDTGITQQLVERVWRDQDLNTYSLLAVFAATDGGITRVFPNKAAEDWTENPEPFNASFYRRSLDNHGYIFKPPHQDSLLRPLELENDTVGVLVSTAVELSLGRRTLRPAVVGVKLDLEAWAEKFKVLASNRTHQDQPQKCGPSSHCEMDCEVNNEDLLCVLIDDGGFLVLSNQNHQWDQVGRFFSEVDANLMLALYNNSFYTRKESYDYQAACAPQPPGNLGAAPRGVFVPTIADFLNLAWWTSAAAWSLFQQLLYGLIYHSWFQADPAEAEGSPETRESSCVMKQTQYYFGSVNASYNAIIDCGNCSRLFHAQRLTNTNLLFVVAEKPLCSQCEAGRLLQKETHSDGPEQCELVQRPRYRRGPHICFDYNATEDTSDCGRGASFPPSLGVLVSLQLLLLLGLPPRPQPQVHSFAASRHL.

An N-terminal signal peptide occupies residues 1–18 (MAVPARTCGASWPGPVRT). The disordered stretch occupies residues 1–37 (MAVPARTCGASWPGPVRTARPWPGRGPRPCPDPRGPA). Residues 19 to 1116 (ARPWPGRGPR…TEDTSDCGRG (1098 aa)) are Extracellular-facing. The span at 24–34 (GRGPRPCPDPR) shows a compositional bias: pro residues. N-linked (GlcNAc...) asparagine glycosylation is present at Asn205. One can recognise a VWFA domain in the interval 294–472 (DMVIIVDVSG…INTQEYLDVL (179 aa)). Positions 300, 302, and 304 each coordinate a divalent metal cation. Residues 300 to 304 (DVSGS) carry the MIDAS-like motif motif. N-linked (GlcNAc...) asparagine glycans are attached at residues Asn389, Asn421, Asn510, Asn543, Asn627, and Asn864. Residues Cys446 and Cys1101 are joined by a disulfide bond. A Cache domain is found at 488 to 577 (WTNVYEDALG…KPQTTNFREP (90 aa)). Residues 1117 to 1137 (ASFPPSLGVLVSLQLLLLLGL) form a helical membrane-spanning segment. At 1138 to 1154 (PPRPQPQVHSFAASRHL) the chain is on the cytoplasmic side.

It belongs to the calcium channel subunit alpha-2/delta family. Dimer formed of alpha-2-2 and delta-2 chains; disulfide-linked. Voltage-dependent calcium channels are multisubunit complexes, consisting of alpha-1 (CACNA1), alpha-2 (CACNA2D), beta (CACNB) and delta (CACNA2D) subunits in a 1:1:1:1 ratio. N-glycosylated. Post-translationally, may be proteolytically processed into subunits alpha-2-2 and delta-2 that are disulfide-linked. It is however unclear whether such cleavage really takes place in vivo and has a functional role. According to PubMed:11306709, it is processed, at least in vitro, while according to PubMed:17052222, it is only poorly processed in vivo. In terms of tissue distribution, predominantly expressed in brain in a restricted pattern. Also expressed at lower level in kidney and testis Not expressed in lung at any moment of development. In brain, it localizes to sections of P21 brain. Expressed at high level in the cerebellum, with moderate levels in medulla, pons, and striatum. Also expressed in cortex, hippocampus, habenula and nucleus reticularis thalami (nRT). Strongly expressed in cerebellar Purkinje cells.

The protein localises to the membrane. Functionally, the alpha-2/delta subunit of voltage-dependent calcium channels regulates calcium current density and activation/inactivation kinetics of the calcium channel. Acts as a regulatory subunit for P/Q-type calcium channel (CACNA1A), N-type (CACNA1B), L-type (CACNA1C OR CACNA1D) and possibly T-type (CACNA1G). The sequence is that of Voltage-dependent calcium channel subunit alpha-2/delta-2 (Cacna2d2) from Mus musculus (Mouse).